Reading from the N-terminus, the 90-residue chain is Large ribosomal subunit protein eL33 (90 aa).

The protein belongs to the eukaryotic ribosomal protein eL33 family.

In Methanopyrus kandleri (strain AV19 / DSM 6324 / JCM 9639 / NBRC 100938), this protein is Large ribosomal subunit protein eL33.